A 137-amino-acid chain; its full sequence is Peptide methionine sulfoxide reductase MsrB (137 aa).

The region spanning 9-131 (DAEWRAMLDD…NSASLRFDAT (123 aa)) is the MsrB domain. The Zn(2+) site is built by Cys48, Cys51, Cys97, and Cys100. The active-site Nucleophile is the Cys120.

It belongs to the MsrB Met sulfoxide reductase family. Requires Zn(2+) as cofactor.

The catalysed reaction is L-methionyl-[protein] + [thioredoxin]-disulfide + H2O = L-methionyl-(R)-S-oxide-[protein] + [thioredoxin]-dithiol. This chain is Peptide methionine sulfoxide reductase MsrB, found in Herminiimonas arsenicoxydans.